The sequence spans 382 residues: Elongation factor Tu (382 aa).

Residues 1–7 (HVDHGKT), 62–66 (DCPGH), and 117–120 (NKVD) contribute to the GTP site. The 190-residue stretch at 1–190 (HVDHGKTTLT…AVDEYIPTPQ (190 aa)) folds into the tr-type G domain. Thr-7 provides a ligand contact to Mg(2+).

The protein belongs to the TRAFAC class translation factor GTPase superfamily. Classic translation factor GTPase family. EF-Tu/EF-1A subfamily. As to quaternary structure, monomer.

The protein localises to the cytoplasm. It carries out the reaction GTP + H2O = GDP + phosphate + H(+). In terms of biological role, GTP hydrolase that promotes the GTP-dependent binding of aminoacyl-tRNA to the A-site of ribosomes during protein biosynthesis. The polypeptide is Elongation factor Tu (Chloroflexus aurantiacus).